Reading from the N-terminus, the 159-residue chain is Ribosomal RNA large subunit methyltransferase H (159 aa).

Residues leucine 76, glycine 108, and 127 to 132 each bind S-adenosyl-L-methionine; that span reads FSKMTF.

Belongs to the RNA methyltransferase RlmH family. Homodimer.

It localises to the cytoplasm. It carries out the reaction pseudouridine(1915) in 23S rRNA + S-adenosyl-L-methionine = N(3)-methylpseudouridine(1915) in 23S rRNA + S-adenosyl-L-homocysteine + H(+). Its function is as follows. Specifically methylates the pseudouridine at position 1915 (m3Psi1915) in 23S rRNA. The sequence is that of Ribosomal RNA large subunit methyltransferase H from Clostridium novyi (strain NT).